The sequence spans 315 residues: tRNA uridine(34) hydroxylase (315 aa).

A Rhodanese domain is found at 136-230 (SDPETLVIDT…YLEEIPPEES (95 aa)). The active-site Cysteine persulfide intermediate is C190.

Belongs to the TrhO family.

The enzyme catalyses uridine(34) in tRNA + AH2 + O2 = 5-hydroxyuridine(34) in tRNA + A + H2O. Catalyzes oxygen-dependent 5-hydroxyuridine (ho5U) modification at position 34 in tRNAs. The protein is tRNA uridine(34) hydroxylase of Sinorhizobium medicae (strain WSM419) (Ensifer medicae).